The chain runs to 130 residues: DNA-directed RNA polymerase subunit omega (130 aa).

The tract at residues 110-130 (EELLKGLEGLAPPEEQPEEDE) is disordered.

It belongs to the RNA polymerase subunit omega family. In terms of assembly, the RNAP catalytic core consists of 2 alpha, 1 beta, 1 beta' and 1 omega subunit. When a sigma factor is associated with the core the holoenzyme is formed, which can initiate transcription.

The catalysed reaction is RNA(n) + a ribonucleoside 5'-triphosphate = RNA(n+1) + diphosphate. Promotes RNA polymerase assembly. Latches the N- and C-terminal regions of the beta' subunit thereby facilitating its interaction with the beta and alpha subunits. This chain is DNA-directed RNA polymerase subunit omega, found in Rhodopseudomonas palustris (strain HaA2).